The chain runs to 432 residues: Trigger factor (432 aa).

The PPIase FKBP-type domain maps to 161-246; sequence GSRATIDFVG…LNKVEARELP (86 aa).

Belongs to the FKBP-type PPIase family. Tig subfamily.

The protein resides in the cytoplasm. It catalyses the reaction [protein]-peptidylproline (omega=180) = [protein]-peptidylproline (omega=0). Functionally, involved in protein export. Acts as a chaperone by maintaining the newly synthesized protein in an open conformation. Functions as a peptidyl-prolyl cis-trans isomerase. This Vibrio atlanticus (strain LGP32) (Vibrio splendidus (strain Mel32)) protein is Trigger factor.